A 60-amino-acid chain; its full sequence is Large ribosomal subunit protein eL37 (60 aa).

Positions 18, 21, 33, and 36 each coordinate Zn(2+). A C4-type zinc finger spans residues 18-36 (CRRCGKNSYHVRKKVCAAC).

The protein belongs to the eukaryotic ribosomal protein eL37 family. It depends on Zn(2+) as a cofactor.

In terms of biological role, binds to the 23S rRNA. This Methanothermobacter thermautotrophicus (strain ATCC 29096 / DSM 1053 / JCM 10044 / NBRC 100330 / Delta H) (Methanobacterium thermoautotrophicum) protein is Large ribosomal subunit protein eL37 (rpl37e).